The chain runs to 123 residues: Small ribosomal subunit protein uS11 (123 aa).

The protein belongs to the universal ribosomal protein uS11 family. As to quaternary structure, part of the 30S ribosomal subunit. Interacts with proteins S7 and S18. Binds to IF-3.

Located on the platform of the 30S subunit, it bridges several disparate RNA helices of the 16S rRNA. Forms part of the Shine-Dalgarno cleft in the 70S ribosome. This is Small ribosomal subunit protein uS11 from Coxiella burnetii (strain CbuK_Q154) (Coxiella burnetii (strain Q154)).